The sequence spans 141 residues: Large ribosomal subunit protein uL11 (141 aa).

The protein belongs to the universal ribosomal protein uL11 family. Part of the ribosomal stalk of the 50S ribosomal subunit. Interacts with L10 and the large rRNA to form the base of the stalk. L10 forms an elongated spine to which L12 dimers bind in a sequential fashion forming a multimeric L10(L12)X complex. In terms of processing, one or more lysine residues are methylated.

In terms of biological role, forms part of the ribosomal stalk which helps the ribosome interact with GTP-bound translation factors. This Helicobacter pylori (strain P12) protein is Large ribosomal subunit protein uL11.